The sequence spans 251 residues: MTEAQRHQILLEMLAQLGFVTVEKVVERLGISPATARRDINKLDESGKLKKVRNGAEAITQQRPRWTPMNLHQAQNHDEKVRIAKAASQLVNTGESVVINCGSTAFLLGREMCGKPVQIITNYLPLANYLIDQEHDSVIIMGGQYNKSQSITLSPQGSENSLYAGHWMFTSGKGLTAEGLYKTDMLTAMAEQKMLSVVGKLVVLVDSSKIGERAGMLFSRADQIDMLITGKNANPEILQQLEAQGVSILRV.

In terms of domain architecture, HTH deoR-type spans 3–58 (EAQRHQILLEMLAQLGFVTVEKVVERLGISPATARRDINKLDESGKLKKVRNGAEA). A DNA-binding region (H-T-H motif) is located at residues 20–39 (VTVEKVVERLGISPATARRD).

It localises to the cytoplasm. Functionally, represses ulaG and the ulaABCDEF operon. This Escherichia coli (strain SMS-3-5 / SECEC) protein is HTH-type transcriptional regulator UlaR.